Reading from the N-terminus, the 609-residue chain is Aspartate--tRNA(Asp/Asn) ligase (609 aa).

Glu-177 lines the L-aspartate pocket. Residues 201–204 (QLFK) are aspartate. Arg-223 contributes to the L-aspartate binding site. Residues 223–225 (RDE) and Gln-232 contribute to the ATP site. His-461 contributes to the L-aspartate binding site. Glu-499 lines the ATP pocket. Arg-506 contacts L-aspartate. 551 to 554 (GVDR) contributes to the ATP binding site.

The protein belongs to the class-II aminoacyl-tRNA synthetase family. Type 1 subfamily. As to quaternary structure, homodimer.

It is found in the cytoplasm. The catalysed reaction is tRNA(Asx) + L-aspartate + ATP = L-aspartyl-tRNA(Asx) + AMP + diphosphate. In terms of biological role, aspartyl-tRNA synthetase with relaxed tRNA specificity since it is able to aspartylate not only its cognate tRNA(Asp) but also tRNA(Asn). Reaction proceeds in two steps: L-aspartate is first activated by ATP to form Asp-AMP and then transferred to the acceptor end of tRNA(Asp/Asn). This chain is Aspartate--tRNA(Asp/Asn) ligase, found in Synechococcus sp. (strain CC9605).